Reading from the N-terminus, the 379-residue chain is Anhydro-N-acetylmuramic acid kinase (379 aa).

9–16 provides a ligand contact to ATP; sequence GTSADGVD.

Belongs to the anhydro-N-acetylmuramic acid kinase family.

The enzyme catalyses 1,6-anhydro-N-acetyl-beta-muramate + ATP + H2O = N-acetyl-D-muramate 6-phosphate + ADP + H(+). It participates in amino-sugar metabolism; 1,6-anhydro-N-acetylmuramate degradation. The protein operates within cell wall biogenesis; peptidoglycan recycling. Its function is as follows. Catalyzes the specific phosphorylation of 1,6-anhydro-N-acetylmuramic acid (anhMurNAc) with the simultaneous cleavage of the 1,6-anhydro ring, generating MurNAc-6-P. Is required for the utilization of anhMurNAc either imported from the medium or derived from its own cell wall murein, and thus plays a role in cell wall recycling. This Parasynechococcus marenigrum (strain WH8102) protein is Anhydro-N-acetylmuramic acid kinase.